Here is a 272-residue protein sequence, read N- to C-terminus: Digeranylgeranylglyceryl phosphate synthase (272 aa).

The next 8 helical transmembrane spans lie at 16 to 36 (AFIAVLLMAIIGHTYNYEIIL), 79 to 99 (ALYYSLILFLVSIILGFIISL), 100 to 120 (ENGIVVILCTILMIIYAYDLK), 124 to 144 (FIGNLCVAILTGLTFVFGGLI), 148 to 168 (VNLGFILGFFAFLMTLSREII), 194 to 214 (AVMLAVILNIITCILSPLLYY), 217 to 237 (IFSIVYLIIIIIADIIFVYSA), and 252 to 272 (ISKYMKIGMLIAFVSFAMGAL).

Belongs to the UbiA prenyltransferase family. DGGGP synthase subfamily. Requires Mg(2+) as cofactor.

The protein resides in the cell membrane. The enzyme catalyses sn-3-O-(geranylgeranyl)glycerol 1-phosphate + (2E,6E,10E)-geranylgeranyl diphosphate = 2,3-bis-O-(geranylgeranyl)-sn-glycerol 1-phosphate + diphosphate. It functions in the pathway membrane lipid metabolism; glycerophospholipid metabolism. Prenyltransferase that catalyzes the transfer of the geranylgeranyl moiety of geranylgeranyl diphosphate (GGPP) to the C2 hydroxyl of (S)-3-O-geranylgeranylglyceryl phosphate (GGGP). This reaction is the second ether-bond-formation step in the biosynthesis of archaeal membrane lipids. The protein is Digeranylgeranylglyceryl phosphate synthase of Methanosphaera stadtmanae (strain ATCC 43021 / DSM 3091 / JCM 11832 / MCB-3).